The primary structure comprises 315 residues: Methionyl-tRNA formyltransferase (315 aa).

107-110 serves as a coordination point for (6S)-5,6,7,8-tetrahydrofolate; the sequence is SLLP.

It belongs to the Fmt family.

The enzyme catalyses L-methionyl-tRNA(fMet) + (6R)-10-formyltetrahydrofolate = N-formyl-L-methionyl-tRNA(fMet) + (6S)-5,6,7,8-tetrahydrofolate + H(+). Its function is as follows. Attaches a formyl group to the free amino group of methionyl-tRNA(fMet). The formyl group appears to play a dual role in the initiator identity of N-formylmethionyl-tRNA by promoting its recognition by IF2 and preventing the misappropriation of this tRNA by the elongation apparatus. This chain is Methionyl-tRNA formyltransferase, found in Borrelia garinii subsp. bavariensis (strain ATCC BAA-2496 / DSM 23469 / PBi) (Borreliella bavariensis).